Here is a 135-residue protein sequence, read N- to C-terminus: CDGSH iron-sulfur domain-containing protein 2B (135 aa).

The Lumenal segment spans residues 1-37 (MVLETISKIIKTQLPAYLKKFPLPETIGGFARLTVLD). The helical transmembrane segment at 38–60 (WLRLLPLLGILALLGYLTIRPFL) threads the bilayer. Over 61 to 135 (PKKKKQKDSL…GPLILKKKIL (75 aa)) the chain is Cytoplasmic. Residues Cys-99, Cys-101, Cys-110, and His-114 each coordinate [2Fe-2S] cluster.

This sequence belongs to the CISD protein family. CISD2 subfamily. As to quaternary structure, homodimer. It depends on [2Fe-2S] cluster as a cofactor.

It is found in the endoplasmic reticulum membrane. The protein localises to the mitochondrion outer membrane. In terms of biological role, regulator of autophagy that contributes to antagonize becn1-mediated cellular autophagy at the endoplasmic reticulum. Participates in the interaction of bcl2 with becn1 and is required for bcl2-mediated depression of endoplasmic reticulum Ca(2+) stores during autophagy. This chain is CDGSH iron-sulfur domain-containing protein 2B (cisd2b), found in Salmo salar (Atlantic salmon).